The sequence spans 292 residues: Small ribosomal subunit biogenesis GTPase RsgA (292 aa).

In terms of domain architecture, CP-type G spans K62 to L213. GTP is bound by residues S111–D114 and G156–T164. The Zn(2+) site is built by C237, C242, H244, and C250.

This sequence belongs to the TRAFAC class YlqF/YawG GTPase family. RsgA subfamily. Monomer. Associates with 30S ribosomal subunit, binds 16S rRNA. It depends on Zn(2+) as a cofactor.

The protein resides in the cytoplasm. Functionally, one of several proteins that assist in the late maturation steps of the functional core of the 30S ribosomal subunit. Helps release RbfA from mature subunits. May play a role in the assembly of ribosomal proteins into the subunit. Circularly permuted GTPase that catalyzes slow GTP hydrolysis, GTPase activity is stimulated by the 30S ribosomal subunit. The polypeptide is Small ribosomal subunit biogenesis GTPase RsgA (Streptococcus pneumoniae serotype 4 (strain ATCC BAA-334 / TIGR4)).